A 484-amino-acid polypeptide reads, in one-letter code: Aspartyl/glutamyl-tRNA(Asn/Gln) amidotransferase subunit B (484 aa).

It belongs to the GatB/GatE family. GatB subfamily. In terms of assembly, heterotrimer of A, B and C subunits.

It carries out the reaction L-glutamyl-tRNA(Gln) + L-glutamine + ATP + H2O = L-glutaminyl-tRNA(Gln) + L-glutamate + ADP + phosphate + H(+). The catalysed reaction is L-aspartyl-tRNA(Asn) + L-glutamine + ATP + H2O = L-asparaginyl-tRNA(Asn) + L-glutamate + ADP + phosphate + 2 H(+). In terms of biological role, allows the formation of correctly charged Asn-tRNA(Asn) or Gln-tRNA(Gln) through the transamidation of misacylated Asp-tRNA(Asn) or Glu-tRNA(Gln) in organisms which lack either or both of asparaginyl-tRNA or glutaminyl-tRNA synthetases. The reaction takes place in the presence of glutamine and ATP through an activated phospho-Asp-tRNA(Asn) or phospho-Glu-tRNA(Gln). This is Aspartyl/glutamyl-tRNA(Asn/Gln) amidotransferase subunit B from Bordetella bronchiseptica (strain ATCC BAA-588 / NCTC 13252 / RB50) (Alcaligenes bronchisepticus).